Here is a 212-residue protein sequence, read N- to C-terminus: MNIFRLTGDLSHLAAIIILLLKIWKSRSCAGISGKSQILFALVFTTRYLDLLTSFISLYNTCMKVIYIGCAYATVYLIYAKFRATYDGNHDTFRAEFLVVPVGGLAFLVNHDFSPLEILWTFSIYLESVAILPQLFMISKTGEAETITTHYLFCLGVYRALYLFNWIWRFYFEGFFDMIAIVAGVVQTILYCDFFYLYVTKVLKGKKLSLPA.

The Lumenal segment spans residues 1–4 (MNIF). The chain crosses the membrane as a helical span at residues 5–24 (RLTGDLSHLAAIIILLLKIW). Residues 25–32 (KSRSCAGI) lie on the Cytoplasmic side of the membrane. Residues 33–52 (SGKSQILFALVFTTRYLDLL) form a helical membrane-spanning segment. An interaction with the K-D-E-L motif on target proteins region spans residues 47 to 48 (RY). Residues 53-58 (TSFISL) are Lumenal-facing. A helical transmembrane segment spans residues 59 to 79 (YNTCMKVIYIGCAYATVYLIY). Over 80 to 92 (AKFRATYDGNHDT) the chain is Cytoplasmic. The helical transmembrane segment at 93-110 (FRAEFLVVPVGGLAFLVN) threads the bilayer. At 111–116 (HDFSPL) the chain is on the lumenal side. A helical transmembrane segment spans residues 117 to 135 (EILWTFSIYLESVAILPQL). The Cytoplasmic portion of the chain corresponds to 136–149 (FMISKTGEAETITT). A helical transmembrane segment spans residues 150–168 (HYLFCLGVYRALYLFNWIW). Residues 159 to 169 (RALYLFNWIWR) are interaction with the K-D-E-L motif on target proteins. Residues 169–178 (RFYFEGFFDM) lie on the Lumenal side of the membrane. Residues 179–199 (IAIVAGVVQTILYCDFFYLYV) traverse the membrane as a helical segment. Over 200–212 (TKVLKGKKLSLPA) the chain is Cytoplasmic. The tract at residues 204–207 (KGKK) is important for recycling of cargo proteins with the sequence motif K-D-E-L from the Golgi to the endoplasmic reticulum.

It belongs to the ERD2 family.

It is found in the endoplasmic reticulum membrane. The protein resides in the golgi apparatus membrane. Its subcellular location is the cytoplasmic vesicle. It localises to the COPI-coated vesicle membrane. In terms of biological role, receptor for the C-terminal sequence motif K-D-E-L that is present on endoplasmic reticulum resident proteins and that mediates their recycling from the Golgi back to the endoplasmic reticulum. Binding is pH dependent, and is optimal at pH 5-5.4. This Danio rerio (Zebrafish) protein is ER lumen protein-retaining receptor 2 (kdelr2).